The following is a 556-amino-acid chain: CDP-diacylglycerol--glycerol-3-phosphate 3-phosphatidyltransferase, mitochondrial (556 aa).

The transit peptide at 1-28 (MAVAAAAAAGPVFWRRLLGLLPGRPGLA) directs the protein to the mitochondrion. Position 49 is a phosphoserine (serine 49). Residue 124–131 (ASLYLGTG) coordinates ATP. PLD phosphodiesterase domains follow at residues 215-241 (TIGLQHIKVYLFDNSVILSGANLSDSY) and 460-493 (RGWTFHAKGLWLYLAGSSLPCLTLIGSPNFGYRS). Active-site residues include histidine 220, lysine 222, and aspartate 227.

This sequence belongs to the CDP-alcohol phosphatidyltransferase class-II family.

It is found in the mitochondrion. It carries out the reaction a CDP-1,2-diacyl-sn-glycerol + sn-glycerol 3-phosphate = a 1,2-diacyl-sn-glycero-3-phospho-(1'-sn-glycero-3'-phosphate) + CMP + H(+). The protein operates within phospholipid metabolism; phosphatidylglycerol biosynthesis; phosphatidylglycerol from CDP-diacylglycerol: step 1/2. Its activity is regulated as follows. Activated by calcium and magnesium and inhibited by other bivalent cations. Its function is as follows. Functions in the biosynthesis of the anionic phospholipids phosphatidylglycerol and cardiolipin. The polypeptide is CDP-diacylglycerol--glycerol-3-phosphate 3-phosphatidyltransferase, mitochondrial (PGS1) (Pongo abelii (Sumatran orangutan)).